We begin with the raw amino-acid sequence, 611 residues long: DNA mismatch repair protein MutL (611 aa).

A disordered region spans residues 353-387; sequence NRQAAGGNHFATPAPAAAPRPASTASSSWQRQEPV. Residues 363 to 380 are compositionally biased toward low complexity; the sequence is ATPAPAAAPRPASTASSS.

The protein belongs to the DNA mismatch repair MutL/HexB family.

Functionally, this protein is involved in the repair of mismatches in DNA. It is required for dam-dependent methyl-directed DNA mismatch repair. May act as a 'molecular matchmaker', a protein that promotes the formation of a stable complex between two or more DNA-binding proteins in an ATP-dependent manner without itself being part of a final effector complex. The polypeptide is DNA mismatch repair protein MutL (Erwinia tasmaniensis (strain DSM 17950 / CFBP 7177 / CIP 109463 / NCPPB 4357 / Et1/99)).